A 59-amino-acid chain; its full sequence is U-reduvitoxin-Pr6a (59 aa).

The N-terminal stretch at M1–G19 is a signal peptide. 3 disulfide bridges follow: C31/C46, C38/C51, and C45/C58.

This sequence belongs to the venom Ptu1-like knottin family. In terms of tissue distribution, expressed by the venom gland.

Its subcellular location is the secreted. Its function is as follows. Binds reversibly and blocks P/Q-type voltage-gated calcium channels (Cav). This is U-reduvitoxin-Pr6a from Platymeris rhadamanthus (Red spot assassin bug).